A 582-amino-acid chain; its full sequence is Protein LYRIC (582 aa).

At 1–48 (MAARSWQDELAQQAEEGSARLREMLSVGLGFLRTELGLDLGLEPKRYP) the chain is on the lumenal side. An activation of NF-kappa-B region spans residues 1-71 (MAARSWQDEL…LLLFLLGYGW (71 aa)). A helical transmembrane segment spans residues 49–69 (GWVILVGTGALGLLLLFLLGY). The Cytoplasmic segment spans residues 70–582 (GWAAACAGAR…KKKKKARRET (513 aa)). The interval 72 to 169 (AAACAGARKK…EKSKKNKKKS (98 aa)) is interaction with BCCIP. The segment at 78 to 222 (ARKKRRSPPR…DSGSLDSTIP (145 aa)) is disordered. Low complexity predominate over residues 93–106 (AAVPAAAPDDLALL). The interval 101–205 (DDLALLKNLR…ISHREKRQQR (105 aa)) is interaction with RELA. Over residues 109–127 (LRSEEQKKKNRKKLSEKPK) the composition is skewed to basic and acidic residues. A Phosphothreonine modification is found at Thr143. Basic residues predominate over residues 160–169 (EKSKKNKKKS). The residue at position 180 (Ser180) is a Phosphoserine. Residues 198–208 (HREKRQQRKRD) show a composition bias toward basic residues. Phosphoserine occurs at positions 216 and 251. Residue Lys264 is modified to N6-acetyllysine. Residues 280 to 582 (TVNGGGWNEK…KKKKKARRET (303 aa)) are disordered. Phosphoserine occurs at positions 298, 306, 308, 311, 323, 339, 344, and 369. A compositionally biased stretch (polar residues) spans 320–333 (SAWSQDTGDANTNG). 2 stretches are compositionally biased toward polar residues: residues 354–372 (EPVSQSTTSDYQWDVSRNQ) and 383–394 (NGLSSADPNSDW). Residues 381 to 443 (GLNGLSSADP…EGALPTGKSK (63 aa)) form a lung-homing for mammary tumors region. Residues Ser415 and Ser426 each carry the phosphoserine modification. A compositionally biased stretch (basic and acidic residues) spans 421 to 434 (DDQKVSDDDKEKGE). The span at 441-451 (KSKKKKKKKKK) shows a compositional bias: basic residues. A Phosphoserine modification is found at Ser457. Phosphothreonine is present on Thr458. Residues Ser478, Ser494, and Ser496 each carry the phosphoserine modification. Composition is skewed to polar residues over residues 504–520 (KNSQPIKTLPPATSTEP) and 549–568 (NTKQNSVPPSQTKSETSWES). At Ser568 the chain carries Phosphoserine. Positions 571-582 (QIKKKKKARRET) are enriched in basic residues.

Interacts with BCCIP, CREBBP/CBP and RELA/p65. As to expression, widely expressed with highest levels in muscle-dominating organs such as skeletal muscle, heart, tongue and small intestine and in endocrine glands such as thyroid and adrenal gland. Overexpressed in various cancers including breast, brain, prostate, melanoma and glioblastoma multiforme.

The protein localises to the endoplasmic reticulum membrane. The protein resides in the nucleus membrane. It localises to the cell junction. It is found in the tight junction. Its subcellular location is the nucleus. The protein localises to the nucleolus. The protein resides in the cytoplasm. It localises to the perinuclear region. Its function is as follows. Down-regulates SLC1A2/EAAT2 promoter activity when expressed ectopically. Activates the nuclear factor kappa-B (NF-kappa-B) transcription factor. Promotes anchorage-independent growth of immortalized melanocytes and astrocytes which is a key component in tumor cell expansion. Promotes lung metastasis and also has an effect on bone and brain metastasis, possibly by enhancing the seeding of tumor cells to the target organ endothelium. Induces chemoresistance. The sequence is that of Protein LYRIC (MTDH) from Homo sapiens (Human).